A 443-amino-acid polypeptide reads, in one-letter code: tRNA (guanine-N(7)-)-methyltransferase non-catalytic subunit TRM82 (443 aa).

The tract at residues 67–93 (ASKKLKTNDGEPVAQPKKQAKVPKPGP) is disordered. WD repeat units lie at residues 97-137 (PVYQ…KDNI), 193-235 (GHVS…IVDK), and 239-279 (GHEE…LLFK).

Belongs to the WD repeat TRM82 family. Forms a heterodimer with the catalytic subunit TRM8.

It localises to the nucleus. It participates in tRNA modification; N(7)-methylguanine-tRNA biosynthesis. In terms of biological role, required for the formation of N(7)-methylguanine at position 46 (m7G46) in tRNA. In the complex, it is required to stabilize and induce conformational changes of the catalytic subunit. In Kluyveromyces lactis (strain ATCC 8585 / CBS 2359 / DSM 70799 / NBRC 1267 / NRRL Y-1140 / WM37) (Yeast), this protein is tRNA (guanine-N(7)-)-methyltransferase non-catalytic subunit TRM82.